The primary structure comprises 590 residues: MNMTDCSVGSNPLAQLNKHAQGQGSSLSNTHVRHSGGVSGSNVFRSGQNVVSEDGRQQLNSFMSQPMRLGEDKMHPATPMGSSMGNAIGGSMMQVDDSSMRSAGDSQWTREFRQNTAGKTNMAQEMGSSGAAMANSNAWKFRYSPMTNVNNTAPLRPFNNIIRQKERANGLETGDIAWNDKFDELEKEVSDKLNFKDGETVEKMDTGAEMQQDNLETGDSTDYQKEFQEVWDSIQQDTEEMLSYKDDYEDMLNDTDFERSFLGKRAVESLEYKFENPSENQYMNNPNAYQIGCILMENGAKLSEAALAFEAAIKQDPKHVDAWLKLGIVQIQNEKELNGMSALETCLKLDPNNLEAMKNLAISYINEGYDMSAYNMLNRWADTKYPGFYNSAELEGKRDEHENIHSKMTRRFLSLVNRINSVDPDIQLCLGLLFYANDEFDRTIDCFQAALKVNPNDELMWNRLGASLANSNRSEEAIQAYHRALQLKPSFVRARYNLAVSSMNIGCYKEAAEHLLTALSMHDVEGEFEVQSTRSNSISSADKYSFSGFKPTDNLLETLKRVFISMGRDDLLDRVRPGMDLSQFRNEFTF.

C6 is covalently cross-linked (Glycyl cysteine thioester (Cys-Gly) (interchain with G-Cter in ubiquitin)). An amphipathic helix 1 (AH1) region spans residues 7–29 (SVGSNPLAQLNKHAQGQGSSLSN). K18 is covalently cross-linked (Glycyl lysine isopeptide (Lys-Gly) (interchain with G-Cter in ubiquitin)). The span at 18–30 (KHAQGQGSSLSNT) shows a compositional bias: polar residues. Residues 18–45 (KHAQGQGSSLSNTHVRHSGGVSGSNVFR) are disordered. Residues 56–74 (RQQLNSFMSQPMRLGEDKM) are amphipathic helix 2 (AH2). 3 short sequence motifs (wxxxF/Y motif) span residues 108 to 112 (WTREF), 139 to 143 (WKFRY), and 178 to 182 (WNDKF). Residues 227 to 243 (FQEVWDSIQQDTEEMLS) form an amphipathic helix 4 (AH4) region. TPR repeat units follow at residues 285–319 (NPNA…DPKH), 320–353 (VDAW…DPNN), 424–457 (PDIQ…NPND), 459–491 (LMWN…KPSF), and 493–525 (RARY…HDVE).

The protein belongs to the peroxisomal targeting signal receptor family. In terms of assembly, interacts (via WxxxF/Y and LVxEF motifs) with PEX14; promoting translocation through the PEX13-PEX14 docking complex. Monoubiquitinated at Cys-6 by PEX2 during PEX5 passage through the retrotranslocation channel: monoubiquitination acts as a signal for PEX5 extraction and is required for proper export from peroxisomes and recycling. When PEX5 recycling is compromised, polyubiquitinated at Lys-18 by PEX10 during its passage through the retrotranslocation channel, leading to its degradation.

It localises to the cytoplasm. Its subcellular location is the cytosol. The protein resides in the peroxisome matrix. Receptor that mediates peroxisomal import of proteins containing a C-terminal PTS1-type tripeptide peroxisomal targeting signal (SKL-type). Binds to cargo proteins containing a PTS1 peroxisomal targeting signal in the cytosol, and translocates them into the peroxisome matrix by passing through the PEX13-PEX14 docking complex along with cargo proteins. PEX5 receptor is then retrotranslocated into the cytosol, leading to release of bound cargo in the peroxisome matrix, and reset for a subsequent peroxisome import cycle. This chain is Peroxisomal targeting signal receptor (PEX5), found in Candida glabrata (strain ATCC 2001 / BCRC 20586 / JCM 3761 / NBRC 0622 / NRRL Y-65 / CBS 138) (Yeast).